We begin with the raw amino-acid sequence, 133 residues long: DNA-directed RNA polymerases I, II, and III subunit rpabc2 (133 aa).

Positions 1-32 are enriched in acidic residues; the sequence is MADFEGGGDDGGYEEFDEGGGFEEEYVEETET. The disordered stretch occupies residues 1–55; sequence MADFEGGGDDGGYEEFDEGGGFEEEYVEETETTEAYTDIIDPSADANTAEAGRIP.

The protein belongs to the archaeal Rpo6/eukaryotic RPB6 RNA polymerase subunit family. As to quaternary structure, component of the RNA polymerase I (Pol I), RNA polymerase II (Pol II) and RNA polymerase III (Pol III) complexes consisting of at least 13, 12 and 17 subunits, respectively.

It is found in the nucleus. Functionally, DNA-dependent RNA polymerases catalyze the transcription of DNA into RNA using the four ribonucleoside triphosphates as substrates. Common component of RNA polymerases I, II and III which synthesize ribosomal RNA precursors, mRNA precursors and many functional non-coding RNAs, and small RNAs, such as 5S rRNA and tRNAs, respectively. Pol II is the central component of the basal RNA polymerase II transcription machinery. Pols are composed of mobile elements that move relative to each other. In Pol II, RPB6 is part of the clamp element and together with parts of RPB1 and RPB2 forms a pocket to which the RPB4-RPB7 subcomplex binds. The protein is DNA-directed RNA polymerases I, II, and III subunit rpabc2 (polr2f) of Dictyostelium discoideum (Social amoeba).